The primary structure comprises 927 residues: MSAKLLYNLSDENPNLNKQIGCMNGIFQVFYRQHYPPRRVTGDELKSLPSGKASDNVGDTNISADKKETEKSKKKKTAKEKQRGVSSESSSRLSFSSSPCSSSFSSADISTTASQFEQPGLSNGENPVREPTNGSPRWGGLMMPSDIRELVRSSIHKETRTRDEEALSQQPKSARANVSLLKESSPSRNSNEWSEGRRVVKLKDSPRFSYDERETRKTGAKLKETPRLSLDSRSNSFRSARSSCSPEPQELVTGHRRTTSSVVAKLMGLEVIPDEPVTIQNRENRFCDSPRPTSRVEVDLQRSRGFDSIKKMMPAKFPMKASPWAQVDGAKNQVKIPDATTLTVYGEIQKRLSQLEFKKSEKDLRALKQILEAMEKTQQLISKDDDDNKTLCSSNFMQRNNQPIPSAINTSSMNFKSSSIVVMKAATAPVFKDTGIAGSASFSPRNVALPNVKVGNLRQAQKVIPRKQSAMDVTPRPGYYKGQTESTMKNTSTRPLQSKSDMAKSGKIQKPSVSLRTPPKKLGFEKQSRPTSPKPELNKNQRQQLSRQQTESASPRRKPGIKSRGLQQSEDRLSDESSDLRSLRSDSNVSLASNLDTEVTSRYNYERNSDITEQHTPKQRSPDLGMRSLSKPLKVTVEQPSPVSVLDVAFDEDDSPSPVRKISIVFKEDDNLSSEESHWMNKNNNLCRSIVWPESNTSLKQPDAELTEGFMEDDAEFKNGDHKYISEIMLASGLLRDIDYSMISIQLHQAHLPINPSLFFVLEQNKTSNVSLQDNKHKGRGFGQQQTVNLVERSKRKLIFDTINEILAHRFAAEGCTKQPSITLSISTQRTHEKSSRGEELLQTLCSEIDRLQDNSKCILDEDDEDLIWEDLQSHGMNWKEIEGETPGLVLDIERLIFKDLIGEVVTSEFAAFPRMLSGQPRQLFHC.

4 disordered regions span residues 41–198 (TGDE…EGRR), 210–257 (YDER…GHRR), 460–588 (AQKV…SDSN), and 605–626 (YERNSDITEQHTPKQRSPDLGM). The segment covering 86–114 (SSESSSRLSFSSSPCSSSFSSADISTTAS) has biased composition (low complexity). Residues 115–125 (QFEQPGLSNGE) show a composition bias toward polar residues. Residues 146 to 165 (DIRELVRSSIHKETRTRDEE) are compositionally biased toward basic and acidic residues. A compositionally biased stretch (polar residues) spans 182 to 193 (KESSPSRNSNEW). A compositionally biased stretch (basic and acidic residues) spans 210-226 (YDERETRKTGAKLKETP). The segment covering 232–245 (SRSNSFRSARSSCS) has biased composition (low complexity). 2 stretches are compositionally biased toward polar residues: residues 483-500 (QTESTMKNTSTRPLQSKS) and 538-553 (NKNQRQQLSRQQTESA). 2 stretches are compositionally biased toward basic and acidic residues: residues 569 to 584 (SEDRLSDESSDLRSLR) and 605 to 616 (YERNSDITEQHT).

In terms of assembly, interacts (via C-terminus) with TON1A and TON1B. As to expression, expressed in roots, petioles, leaf blades and floral organs.

It is found in the nucleus. Functionally, in association with LNG2, regulates leaf morphology by promoting longitudinal polar cell elongation independently of ROT3. This Arabidopsis thaliana (Mouse-ear cress) protein is Protein LONGIFOLIA 1 (LNG1).